The following is a 565-amino-acid chain: Maturase K (565 aa).

The protein belongs to the intron maturase 2 family. MatK subfamily.

The protein localises to the plastid. The protein resides in the chloroplast. Functionally, usually encoded in the trnK tRNA gene intron. Probably assists in splicing its own and other chloroplast group II introns. In Staurastrum punctulatum (Green alga), this protein is Maturase K.